Here is a 117-residue protein sequence, read N- to C-terminus: uncharacterized protein (117 aa).

A signal peptide spans 1 to 22; that stretch reads MHVKYLAGIVGAALLMAGCSSS.

This is an uncharacterized protein from Escherichia coli O6:H1 (strain CFT073 / ATCC 700928 / UPEC).